A 596-amino-acid polypeptide reads, in one-letter code: MTQPNDAAKPVQGAGRFDIWAPEAGTVTLLAGGERYEMGRRPGNGPADEGWWTAADAPTGADVDYGYLLDGDEIPLPDPRTRRQPEGVHALSRTFDPGAHRWQDAGWQGRELQGSVIYELHIGTFTPEGTLDAAAGKLDYLAGLGIDFIELLPVNAFNGTHNWGYDGVQWFAVHEGYGGPAAYQRFVDAAHAAGLGVIQDVVYNHLGPSGNYLPRYGPYLKHGEGNTWGDSVNLDGPGSDHVRQYILDNVAMWLRDYRVDGLRLDAVHALKDERAVHILEEFGALADALSSEGGRPLTLIAESDLNNPRLLYPRDVNGYGLAGQWSDDFHHAVHVNVSGETTGYYSDFDSLGALAKVLRDGFFHDGSYSSFRGRCHGRPINFSAVHPAALVVCSQNHDQIGNRATGDRLSQSLPYGSLALAAVLTLTGPFTPMLFMGEEYGATTPWQFFTSHPEPELGKATAEGRIREFERMGWDPAVVPDPQDPETFTRSKLDWAEASAGDHARLLELYRSLITLRRSTPELARLGFADTAVEFDDDARWLRYWRGGVQVVLNFADRPISLDRPGTALLLATDDAVRMDGVQVELPPLSAAVLRD.

Residue arginine 263–histidine 268 coordinates substrate. The active-site Nucleophile is the aspartate 265. The Proton donor role is filled by glutamate 302. Substrate contacts are provided by residues aspartate 327 to histidine 331 and histidine 397 to asparagine 402.

It belongs to the glycosyl hydrolase 13 family.

It localises to the cytoplasm. The catalysed reaction is hydrolysis of (1-&gt;4)-alpha-D-glucosidic linkage in 4-alpha-D-[(1-&gt;4)-alpha-D-glucanosyl]n trehalose to yield trehalose and (1-&gt;4)-alpha-D-glucan.. Its pathway is glycan biosynthesis; trehalose biosynthesis. This Rhizobium sp. (strain M-11) protein is Malto-oligosyltrehalose trehalohydrolase (treZ).